A 328-amino-acid polypeptide reads, in one-letter code: NADH-quinone oxidoreductase subunit H 1 (328 aa).

8 consecutive transmembrane segments (helical) span residues 11–31 (VVKAVVLALCVTLAVAVFLLF), 81–101 (LAPVIAFFCALGVWVVIPWAP), 116–136 (VLVILAIAAMGVYGTALGGWA), 154–174 (ISYELAMAMSLLGVILMTGSV), 189–209 (LFPQFLGFLVFYIASLAEAGW), 235–257 (GLFFLTELTHAVNSAVLSTTFFL), 269–289 (IPGFVWFLLKVILMVFVLYWI), and 308–328 (VLLPVAALNLVGTAIYVALWA).

It belongs to the complex I subunit 1 family. In terms of assembly, NDH-1 is composed of 14 different subunits. Subunits NuoA, H, J, K, L, M, N constitute the membrane sector of the complex.

It localises to the cell membrane. It catalyses the reaction a quinone + NADH + 5 H(+)(in) = a quinol + NAD(+) + 4 H(+)(out). Its function is as follows. NDH-1 shuttles electrons from NADH, via FMN and iron-sulfur (Fe-S) centers, to quinones in the respiratory chain. The immediate electron acceptor for the enzyme in this species is believed to be ubiquinone. Couples the redox reaction to proton translocation (for every two electrons transferred, four hydrogen ions are translocated across the cytoplasmic membrane), and thus conserves the redox energy in a proton gradient. This subunit may bind ubiquinone. This Symbiobacterium thermophilum (strain DSM 24528 / JCM 14929 / IAM 14863 / T) protein is NADH-quinone oxidoreductase subunit H 1.